Here is a 360-residue protein sequence, read N- to C-terminus: Peptide chain release factor 1 (360 aa).

Q237 carries the post-translational modification N5-methylglutamine.

Belongs to the prokaryotic/mitochondrial release factor family. Post-translationally, methylated by PrmC. Methylation increases the termination efficiency of RF1.

It localises to the cytoplasm. In terms of biological role, peptide chain release factor 1 directs the termination of translation in response to the peptide chain termination codons UAG and UAA. This chain is Peptide chain release factor 1, found in Pseudomonas entomophila (strain L48).